Consider the following 223-residue polypeptide: Ribose-5-phosphate isomerase A (223 aa).

Substrate is bound by residues 32-35, 83-86, and 96-99; these read TGST, DGAD, and KGGG. Glutamate 105 functions as the Proton acceptor in the catalytic mechanism. Residue lysine 123 coordinates substrate.

It belongs to the ribose 5-phosphate isomerase family. As to quaternary structure, homodimer.

The enzyme catalyses aldehydo-D-ribose 5-phosphate = D-ribulose 5-phosphate. Its pathway is carbohydrate degradation; pentose phosphate pathway; D-ribose 5-phosphate from D-ribulose 5-phosphate (non-oxidative stage): step 1/1. Its function is as follows. Catalyzes the reversible conversion of ribose-5-phosphate to ribulose 5-phosphate. The sequence is that of Ribose-5-phosphate isomerase A from Acinetobacter baumannii (strain ATCC 17978 / DSM 105126 / CIP 53.77 / LMG 1025 / NCDC KC755 / 5377).